Here is a 394-residue protein sequence, read N- to C-terminus: Alcohol dehydrogenase-like 3 (394 aa).

Zn(2+)-binding residues include Cys-48, Thr-50, His-71, Cys-101, Cys-104, Cys-107, Cys-115, and Cys-188. Positions 50 and 71 each coordinate an alcohol. Thr-50 is a binding site for NAD(+). NAD(+) contacts are provided by residues 213-218 (GLGSVG), Asp-237, Lys-242, Thr-283, Val-306, 306-308 (VGI), Phe-333, and Arg-383.

This sequence belongs to the zinc-containing alcohol dehydrogenase family. Class-III subfamily. In terms of assembly, homodimer. The cofactor is Zn(2+).

It is found in the cytoplasm. It catalyses the reaction a primary alcohol + NAD(+) = an aldehyde + NADH + H(+). It carries out the reaction a secondary alcohol + NAD(+) = a ketone + NADH + H(+). In Arabidopsis thaliana (Mouse-ear cress), this protein is Alcohol dehydrogenase-like 3.